The chain runs to 391 residues: HNVVDYVASAEYKVFAWGLNDPTEGNPTSIRDPWTDASPYTWNSDGMSKYPTTRGNNAIAQDNPTGGSTYINNYRPQSPNLIFSYPWSPTATPPSSYKDFSITQLFYTTNRYHDLLYSFGFNEAAGNFQVNNGNKGGKGNDFAIVNAQDGSGTNNANFATPPDGSPGRMRMYNWTTARPNRDGCLEAGIVIHEYTHGLSNRLCGGPANSACLNALESGGMGEGWGDFYATAIRLKPRDTKNTNYSMGAWAANNPKGIRAYLYSTNLQTNPYMYTSVNSLREVHQIGTVWASMLYDLMWALIEAHGGTYSANPVFRNGVPQDGRHLSMKLVMDGMALQPCNPNFVQARDAILDADRALTNSANKCTIWKAFAKRGLGYGAKYDARNRTGSNK.

Residues histidine 1–serine 9 constitute a propeptide that is removed on maturation. Asparagine 173 carries N-linked (GlcNAc...) asparagine glycosylation. Histidine 192 lines the Zn(2+) pocket. Residue glutamate 193 is part of the active site. Histidine 196 contacts Zn(2+). N-linked (GlcNAc...) asparagine glycans are attached at residues asparagine 243 and asparagine 385.

Belongs to the peptidase M36 family. It depends on Zn(2+) as a cofactor.

It localises to the secreted. Its function is as follows. Secreted metalloproteinase probably acting as a virulence factor. The sequence is that of Extracellular metalloproteinase 3 (MEP3) from Trichophyton soudanense.